Here is a 426-residue protein sequence, read N- to C-terminus: UDP-N-acetylglucosamine 1-carboxyvinyltransferase (426 aa).

Phosphoenolpyruvate is bound at residue 22-23 (KN). Arg93 contacts UDP-N-acetyl-alpha-D-glucosamine. The Proton donor role is filled by Asp117. Asp312 and Met334 together coordinate UDP-N-acetyl-alpha-D-glucosamine.

It belongs to the EPSP synthase family. MurA subfamily.

Its subcellular location is the cytoplasm. It carries out the reaction phosphoenolpyruvate + UDP-N-acetyl-alpha-D-glucosamine = UDP-N-acetyl-3-O-(1-carboxyvinyl)-alpha-D-glucosamine + phosphate. It participates in cell wall biogenesis; peptidoglycan biosynthesis. Its function is as follows. Cell wall formation. Adds enolpyruvyl to UDP-N-acetylglucosamine. The sequence is that of UDP-N-acetylglucosamine 1-carboxyvinyltransferase from Treponema denticola (strain ATCC 35405 / DSM 14222 / CIP 103919 / JCM 8153 / KCTC 15104).